Consider the following 133-residue polypeptide: Profilin (133 aa).

It belongs to the profilin family.

More likely to influence phosphoinositide metabolism than actin assembly. This is Profilin from Vaccinia virus (strain Tian Tan) (VACV).